We begin with the raw amino-acid sequence, 466 residues long: Siroheme synthase (466 aa).

Residues 1–203 (MNYLPIFIDI…GKIQEAKADL (203 aa)) are precorrin-2 dehydrogenase /sirohydrochlorin ferrochelatase. NAD(+) contacts are provided by residues 22 to 23 (SI) and 43 to 44 (KS). S128 carries the phosphoserine modification. The interval 216–466 (GAVYLVGGGP…FDAKPISSKK (251 aa)) is uroporphyrinogen-III C-methyltransferase. P225 provides a ligand contact to S-adenosyl-L-methionine. D248 acts as the Proton acceptor in catalysis. K270 functions as the Proton donor in the catalytic mechanism. Residues 301 to 303 (GGD), I306, 331 to 332 (TA), M383, and G412 each bind S-adenosyl-L-methionine.

In the N-terminal section; belongs to the precorrin-2 dehydrogenase / sirohydrochlorin ferrochelatase family. It in the C-terminal section; belongs to the precorrin methyltransferase family.

The enzyme catalyses uroporphyrinogen III + 2 S-adenosyl-L-methionine = precorrin-2 + 2 S-adenosyl-L-homocysteine + H(+). It catalyses the reaction precorrin-2 + NAD(+) = sirohydrochlorin + NADH + 2 H(+). It carries out the reaction siroheme + 2 H(+) = sirohydrochlorin + Fe(2+). It functions in the pathway cofactor biosynthesis; adenosylcobalamin biosynthesis; precorrin-2 from uroporphyrinogen III: step 1/1. It participates in cofactor biosynthesis; adenosylcobalamin biosynthesis; sirohydrochlorin from precorrin-2: step 1/1. The protein operates within porphyrin-containing compound metabolism; siroheme biosynthesis; precorrin-2 from uroporphyrinogen III: step 1/1. Its pathway is porphyrin-containing compound metabolism; siroheme biosynthesis; siroheme from sirohydrochlorin: step 1/1. It functions in the pathway porphyrin-containing compound metabolism; siroheme biosynthesis; sirohydrochlorin from precorrin-2: step 1/1. In terms of biological role, multifunctional enzyme that catalyzes the SAM-dependent methylations of uroporphyrinogen III at position C-2 and C-7 to form precorrin-2 via precorrin-1. Then it catalyzes the NAD-dependent ring dehydrogenation of precorrin-2 to yield sirohydrochlorin. Finally, it catalyzes the ferrochelation of sirohydrochlorin to yield siroheme. The chain is Siroheme synthase from Vesicomyosocius okutanii subsp. Calyptogena okutanii (strain HA).